A 1679-amino-acid polypeptide reads, in one-letter code: Probable myosin heavy chain ECU04_1000 (1679 aa).

The span at 1-14 (MEGTTNKDIGSGSS) shows a compositional bias: polar residues. The disordered stretch occupies residues 1–22 (MEGTTNKDIGSGSSRPGGEVSV). A Myosin N-terminal SH3-like domain is found at 31–79 (MEKKWVWAPSSKEAYVCGFVVKEEGDVLEIDCRGVIVRHKSCEVFRMNP). The Myosin motor domain maps to 83–754 (DMVDDLAELS…VLADIEDMRD (672 aa)). Residue 176–183 (GESGAGKT) coordinates ATP. The tract at residues 624 to 646 (LASLMSELRRTNPHFVRCIIPNL) is actin-binding. Residues 823–1644 (GEMKEKEAMI…SKMLEMKKKL (822 aa)) are a coiled coil.

The protein belongs to the TRAFAC class myosin-kinesin ATPase superfamily. Myosin family.

Functionally, cellular myosin that appears to play a role in cytokinesis, cell shape, and specialized functions such as secretion and capping. The chain is Probable myosin heavy chain ECU04_1000 from Encephalitozoon cuniculi (strain GB-M1) (Microsporidian parasite).